We begin with the raw amino-acid sequence, 1036 residues long: DNA-directed RNA polymerase subunit beta (1036 aa).

The protein belongs to the RNA polymerase beta chain family. As to quaternary structure, in plastids the minimal PEP RNA polymerase catalytic core is composed of four subunits: alpha, beta, beta', and beta''. When a (nuclear-encoded) sigma factor is associated with the core the holoenzyme is formed, which can initiate transcription.

Its subcellular location is the plastid. It localises to the chloroplast. The enzyme catalyses RNA(n) + a ribonucleoside 5'-triphosphate = RNA(n+1) + diphosphate. DNA-dependent RNA polymerase catalyzes the transcription of DNA into RNA using the four ribonucleoside triphosphates as substrates. This chain is DNA-directed RNA polymerase subunit beta, found in Cyanidioschyzon merolae (strain NIES-3377 / 10D) (Unicellular red alga).